We begin with the raw amino-acid sequence, 235 residues long: Iron-sulfur cluster co-chaperone protein HscB (235 aa).

Residues Cys41, Cys44, Cys58, and Cys61 each coordinate a divalent metal cation. Residues 72–144 form the J domain; it reads DYFSLMDCNR…LSRGLYLLKL (73 aa).

The protein belongs to the HscB family. In terms of assembly, interacts with ISCU and HSPA9 to form an iron-sulfur transfer complex. Interacts with SDHAF1 (via the first LYR motif); the interaction recruits the iron-sulfur transfer complex composed of HSC20, HSPA9 and ISCU and mediates the incorporation of iron-sulfur clusters into SDHB which also interacts with HSC20. Interacts with the cytoplasmic form of ISCU and with CIA complex member CIAO1 (via LYR motif). As to quaternary structure, homodimer. Interacts with ISCU (cytoplasmic form); this interaction stabilizes the (Fe-S) clusters on ISCU. Interacts with the CIA complex member CIAO1 (via LYR motif). As to expression, expressed in lung, brain, stomach, spleen, ovary, testis, liver, muscle and heart.

It localises to the cytoplasm. Its subcellular location is the mitochondrion. It participates in cofactor biosynthesis; iron-sulfur cluster biosynthesis. In terms of biological role, acts as a co-chaperone in iron-sulfur cluster assembly in mitochondria. Required for incorporation of iron-sulfur clusters into SDHB, the iron-sulfur protein subunit of succinate dehydrogenase that is involved in complex II of the mitochondrial electron transport chain. Recruited to SDHB by interaction with SDHAF1 which first binds SDHB and then recruits the iron-sulfur transfer complex formed by HSC20, HSPA9 and ISCU through direct binding to HSC20. Plays an essential role in hematopoiesis. Acts as a co-chaperone in iron-sulfur cluster assembly in the cytoplasm. Also mediates complex formation between components of the cytosolic iron-sulfur biogenesis pathway and the CIA targeting complex composed of CIAO1, DIPK1B/FAM69B and MMS19 by binding directly to the scaffold protein ISCU and to CIAO1. This facilitates iron-sulfur cluster insertion into a number of cytoplasmic and nuclear proteins including POLD1, ELP3, DPYD and PPAT. In Homo sapiens (Human), this protein is Iron-sulfur cluster co-chaperone protein HscB.